Reading from the N-terminus, the 286-residue chain is 4-hydroxybenzoate octaprenyltransferase (286 aa).

8 helical membrane-spanning segments follow: residues isoleucine 20 to methionine 40, leucine 43 to isoleucine 63, leucine 96 to valine 116, phenylalanine 142 to valine 162, tryptophan 167 to valine 187, glutamine 210 to alanine 230, valine 235 to phenylalanine 255, and phenylalanine 266 to phenylalanine 286.

This sequence belongs to the UbiA prenyltransferase family. Requires Mg(2+) as cofactor.

The protein resides in the cell inner membrane. It catalyses the reaction all-trans-octaprenyl diphosphate + 4-hydroxybenzoate = 4-hydroxy-3-(all-trans-octaprenyl)benzoate + diphosphate. It functions in the pathway cofactor biosynthesis; ubiquinone biosynthesis. Its function is as follows. Catalyzes the prenylation of para-hydroxybenzoate (PHB) with an all-trans polyprenyl group. Mediates the second step in the final reaction sequence of ubiquinone-8 (UQ-8) biosynthesis, which is the condensation of the polyisoprenoid side chain with PHB, generating the first membrane-bound Q intermediate 3-octaprenyl-4-hydroxybenzoate. This Shewanella oneidensis (strain ATCC 700550 / JCM 31522 / CIP 106686 / LMG 19005 / NCIMB 14063 / MR-1) protein is 4-hydroxybenzoate octaprenyltransferase.